The sequence spans 240 residues: Putative cytochrome c-type biogenesis protein DbsD-like (240 aa).

A run of 6 helical transmembrane segments spans residues 32–52, 74–94, 104–124, 149–169, 176–196, and 218–238; these read FVFFSGLFTSFSPCLISILPI, FFFCLGAISSFTTLGLIATLL, GIPVISALVIIYMGFSLLNIV, VGIGLAISSCSTPIFVTLLIW, LFIGLIFILIYSIGYIFPIII, and APFSGTILLSAGTFSLFSSIL.

This sequence belongs to the DsbD family.

It is found in the plastid. The protein localises to the chloroplast membrane. Its function is as follows. Could be involved in cytochrome c synthesis. The chain is Putative cytochrome c-type biogenesis protein DbsD-like from Porphyra purpurea (Red seaweed).